The sequence spans 326 residues: Small ribosomal subunit protein RACK1x (326 aa).

WD repeat units lie at residues 13-53, 61-100, 103-142, 147-188, 191-230, 232-270, and 290-326; these read AHTD…KSYG, GHSH…TTRR, GHTK…KYTI, GHKE…LRNS, GHSG…KLYS, EAGS…VVED, and NQKK…IGRY.

It belongs to the WD repeat G protein beta family. Ribosomal protein RACK1 subfamily. As to quaternary structure, homodimer and heterodimer with RACK1A or RACK1B. Interacts with GB1, MEKK1, MKK4, MKK5, MPK3 and MPK6, but not with GPA1 or MPK4. As to expression, widely expressed.

In terms of biological role, minor component of the RACK1 regulatory proteins that play a role in multiple signal transduction pathways. Involved in multiple hormone responses and developmental processes. MAPK cascade scaffolding protein involved in the protease IV and ArgC signaling pathway but not the flg22 pathway. The sequence is that of Small ribosomal subunit protein RACK1x from Arabidopsis thaliana (Mouse-ear cress).